A 7639-amino-acid chain; its full sequence is Nonribosomal peptide synthetase 4 (7639 aa).

The adenylation 1 stretch occupies residues Trp-244–Phe-636. Residues Thr-776–Glu-852 form the Carrier 1 domain. Ser-813 is subject to O-(pantetheine 4'-phosphoryl)serine. Residues Phe-865–Ser-1295 form an epimerization 1 region. The tract at residues Val-1337–Ile-1767 is condensation 1. The adenylation 2 stretch occupies residues Phe-1786–Leu-2181. The region spanning Ala-2313 to Ser-2389 is the Carrier 2 domain. An O-(pantetheine 4'-phosphoryl)serine modification is found at Ser-2350. Residues Val-2426–Leu-2852 form a condensation 2 region. An adenylation 3 region spans residues Gln-2878 to Ile-3269. The Carrier 3 domain maps to Arg-3403–Glu-3479. Residue Ser-3440 is modified to O-(pantetheine 4'-phosphoryl)serine. Positions Ala-3491–Gln-3928 are epimerization 2. Positions Glu-3961–Thr-4389 are condensation 3. The interval Phe-4407–Leu-4810 is adenylation 4. The Carrier 4 domain maps to Ala-4944–Glu-5020. An O-(pantetheine 4'-phosphoryl)serine modification is found at Ser-4981. The interval Gln-5058–Met-5478 is condensation 4. Residues Phe-5498–Leu-5900 are adenylation 5. The 77-residue stretch at Thr-6039–Gly-6115 folds into the Carrier 5 domain. Ser-6076 carries the O-(pantetheine 4'-phosphoryl)serine modification. Positions Phe-6133 to Leu-6567 are epimerization 3. The interval Val-6607–Gln-7032 is condensation 5. One can recognise a Carrier 6 domain in the interval Arg-7088–Ser-7164. An O-(pantetheine 4'-phosphoryl)serine modification is found at Ser-7125. The interval Leu-7254 to Arg-7603 is condensation 6.

Belongs to the NRP synthetase family.

It catalyses the reaction D-allo-threonine + D-leucine + D-alanine + L-proline + 2 L-leucine + A = fusahexin + AH2 + 6 H2O. It functions in the pathway secondary metabolite biosynthesis. In terms of biological role, nonribosomal peptide synthetase; part of the gene cluster that mediates the biosynthesis of the fusahexin, a cyclic hydrophobic hexapeptide with the amino acid sequence cyclo-(D-Ala-L-Leu-D-allo-Thr-L-Pro-D-Leu-L-Leu) that plays an important role in cell surface hydrophobicity. Fusahexin might also play a role in virulence, sensitivity to osmotic stress and oxidative stress. NRPS4 is the only enzyme within the cluster and its 5 catalytic modules are sufficient to produce fusahexin. The modules 1 to 4 incorporate respectively D-alanine, L-leucine, D-allo-threonine, and L-proline, which is supported by the presence of epimerase domains in modules 1 and 3, which incorporate D-amino acids. The terminal module is responsible for incorporation of the two adjacent leucine units, where the epimerase domain is only used to convert the first unit to D-leucine. The terminal condensation domain (Ct) is involved in cyclization with D-alanine and thereby releasing of fusahexin. The polypeptide is Nonribosomal peptide synthetase 4 (Gibberella zeae (strain ATCC MYA-4620 / CBS 123657 / FGSC 9075 / NRRL 31084 / PH-1) (Wheat head blight fungus)).